Here is an 898-residue protein sequence, read N- to C-terminus: Zinc finger protein 574 (898 aa).

C2H2-type zinc fingers lie at residues Y16–H38, Y76–H98, and Y126–H148. S164 is modified (phosphoserine). Residues Y213–H235 form a C2H2-type 4 zinc finger. The disordered stretch occupies residues A243–G305. Basic and acidic residues predominate over residues H273–D290. Position 301 is a phosphoserine (S301). 4 consecutive C2H2-type zinc fingers follow at residues L310–H332, F337–H359, F365–H387, and H393–H414. The segment at G417 to E460 is disordered. 6 consecutive C2H2-type zinc fingers follow at residues Y467–H490, H496–H518, F524–H546, Y552–H574, Y580–H602, and Y608–H631. The C2H2-type 15; degenerate zinc finger occupies H637–A660. A C2H2-type 16 zinc finger spans residues F668–H690. Residues A691–A735 form a disordered region. A compositionally biased stretch (low complexity) spans R707 to P734. Position 719 is a phosphoserine (S719). Position 726 is a phosphothreonine (T726). 4 C2H2-type zinc fingers span residues L740–H762, Y768–H790, F796–H818, and Y824–H846. R834 bears the Asymmetric dimethylarginine mark.

It belongs to the krueppel C2H2-type zinc-finger protein family.

It is found in the nucleus. Its function is as follows. May be involved in transcriptional regulation. This Rattus norvegicus (Rat) protein is Zinc finger protein 574 (Znf574).